The sequence spans 450 residues: Glutathione reductase (450 aa).

Serine 14, glycine 15, glutamate 34, threonine 41, cysteine 42, and lysine 50 together coordinate FAD. Serine 14 contacts glutathione. The cysteines at positions 42 and 47 are disulfide-linked. Tyrosine 99 contacts glutathione. Alanine 115 is an FAD binding site. Positions 175, 178, 181, 198, 204, and 262 each coordinate NADP(+). Aspartate 303 contributes to the FAD binding site. An NADP(+)-binding site is contributed by glutamate 309. Threonine 311 provides a ligand contact to FAD. Arginine 319 serves as a coordination point for glutathione. Residue valine 342 coordinates NADP(+). Position 439 (histidine 439) interacts with FAD. Residue histidine 439 is the Proton acceptor of the active site.

This sequence belongs to the class-I pyridine nucleotide-disulfide oxidoreductase family. Homodimer. It depends on FAD as a cofactor.

Its subcellular location is the cytoplasm. It carries out the reaction 2 glutathione + NADP(+) = glutathione disulfide + NADPH + H(+). Its function is as follows. Catalyzes the reduction of glutathione disulfide (GSSG) to reduced glutathione (GSH). Constitutes the major mechanism to maintain a high GSH:GSSG ratio in the cytosol. The polypeptide is Glutathione reductase (gor) (Escherichia coli (strain K12)).